The following is a 105-amino-acid chain: Malonate decarboxylase acyl carrier protein (105 aa).

Ser28 is modified (O-(phosphoribosyl dephospho-coenzyme A)serine).

This sequence belongs to the MdcC family. In terms of processing, covalently binds the prosthetic group of malonate decarboxylase.

It localises to the cytoplasm. Functionally, subunit of malonate decarboxylase, it is an acyl carrier protein to which acetyl and malonyl thioester residues are bound via a 2'-(5''-phosphoribosyl)-3'-dephospho-CoA prosthetic group and turn over during the catalytic mechanism. The polypeptide is Malonate decarboxylase acyl carrier protein (Xanthomonas campestris pv. campestris (strain 8004)).